Here is a 64-residue protein sequence, read N- to C-terminus: Conotoxin Im11.2 (64 aa).

Residues 1 to 26 form the signal peptide; that stretch reads MMFRLTSVSCFLLVIVCLNLVVLTNA. Intrachain disulfides connect Cys27–Cys41, Cys34–Cys46, Cys40–Cys50, and Cys45–Cys54. Residue Asp57 is modified to Aspartic acid 1-amide. The propeptide occupies 61–64; the sequence is ATFQ.

This sequence belongs to the conotoxin I2 superfamily. As to expression, expressed by the venom duct.

It is found in the secreted. In Conus imperialis (Imperial cone), this protein is Conotoxin Im11.2.